The chain runs to 501 residues: Cystine/glutamate transporter (501 aa).

Residues 1–43 (MVRKPVVSTISKGGYLQGNVNGRLPSLGNKEPPGQEKVQLKRK) are Cytoplasmic-facing. The residue at position 26 (Ser26) is a Phosphoserine. The chain crosses the membrane as a helical span at residues 44 to 64 (VTLLRGVSIIIGTIIGAGIFI). Over 65-74 (SPKGVLQNTG) the chain is Extracellular. The chain crosses the membrane as a helical span at residues 75 to 95 (SVGMSLTIWTVCGVLSLFGAL). At 96-101 (SYAELG) the chain is on the cytoplasmic side. The stretch at 102-116 (TTIKKSGGHYTYILE) is an intramembrane region. Residues 117 to 130 (VFGPLPAFVRVWVE) lie on the Cytoplasmic side of the membrane. The chain crosses the membrane as a helical span at residues 131 to 150 (LLIIRPAATAVISLAFGRYI). Residue Arg135 participates in L-glutamate binding. Residues 151 to 163 (LEPFFIQCEIPEL) lie on the Extracellular side of the membrane. The chain crosses the membrane as a helical span at residues 164-179 (AIKLITAVGITVVMVL). Residues 180–193 (NSMSVSWSARIQIF) are Cytoplasmic-facing. A helical membrane pass occupies residues 194-210 (LTFCKLTAILIIIVPGV). Residues 211–234 (MQLIKGQTQNFKDAFSGRDSSITR) are Extracellular-facing. A helical membrane pass occupies residues 235-255 (LPLAFYYGMYAYAGWFYLNFV). Tyr244 provides a ligand contact to L-glutamate. Residues 256–265 (TEEVENPEKT) lie on the Cytoplasmic side of the membrane. A helical transmembrane segment spans residues 266–286 (IPLAICISMAIVTIGYVLTNV). Topologically, residues 287–317 (AYFTTINAEELLLSNAVAVTFSERLLGNFSL) are extracellular. Residue Asn314 is glycosylated (N-linked (GlcNAc...) asparagine). A helical transmembrane segment spans residues 318 to 338 (AVPIFVALSCFGSMNGGVFAV). The Cytoplasmic portion of the chain corresponds to 339 to 364 (SRLFYVASREGHLPEILSMIHVRKHT). The chain crosses the membrane as a helical span at residues 365–385 (PLPAVIVLHPLTMIMLFSGDL). Topologically, residues 386-387 (DS) are extracellular. The helical transmembrane segment at 388–408 (LLNFLSFARWLFIGLAVAGLI) threads the bilayer. Topologically, residues 409–422 (YLRYKCPDMHRPFK) are cytoplasmic. A helical transmembrane segment spans residues 423 to 443 (VPLFIPALFSFTCLFMVALSL). At 444-449 (YSDPFS) the chain is on the extracellular side. A helical transmembrane segment spans residues 450-470 (TGIGFVITLTGVPAYYLFIIW). The Cytoplasmic segment spans residues 471–501 (DKKPRWFRIMSEKITRTLQIILEVVPEEDKL).

Belongs to the amino acid-polyamine-organocation (APC) superfamily. L-type amino acid transporter (LAT) (TC 2.A.3.8) family. In terms of assembly, disulfide-linked heterodimer with the amino acid transport protein SLC3A2/4F2hc; this interaction mediates cell membrane localization. Post-translationally, ubiquitinated by TRIM26; leading to proteasomal degradation. Expressed in term placenta and primary term cytotrophoblast. Expressed mainly in the brain, but also in pancreas.

The protein localises to the cell membrane. It is found in the cell projection. Its subcellular location is the microvillus membrane. It catalyses the reaction L-cystine(out) + L-glutamate(in) = L-cystine(in) + L-glutamate(out). The catalysed reaction is an L-alpha-amino acid(in) + L-kynurenine(out) = an L-alpha-amino acid(out) + L-kynurenine(in). The enzyme catalyses N-acetyl-L-cysteine(out) + L-glutamate(in) = N-acetyl-L-cysteine(in) + L-glutamate(out). With respect to regulation, inhibited by erastin and sulfasalazine. Inhibited by (S)-lactate. Inactivated by p-chloromercuribenzoic acid and p-chloromercuribenzenesulfonic acid. In terms of biological role, heterodimer with SLC3A2, that functions as an antiporter by mediating the exchange of extracellular anionic L-cystine and intracellular L-glutamate across the cellular plasma membrane. Provides L-cystine for the maintenance of the redox balance between extracellular L-cystine and L-cysteine and for the maintenance of the intracellular levels of glutathione that is essential for cells protection from oxidative stress. The transport is sodium-independent, electroneutral with a stoichiometry of 1:1, and is drove by the high intracellular concentration of L-glutamate and the intracellular reduction of L-cystine. In addition, mediates the import of L-kynurenine leading to anti-ferroptotic signaling propagation required to maintain L-cystine and glutathione homeostasis. Moreover, mediates N-acetyl-L-cysteine uptake into the placenta leading to subsequently down-regulation of pathways associated with oxidative stress, inflammation and apoptosis. In vitro can also transport L-aspartate. May participate in astrocyte and meningeal cell proliferation during development and can provide neuroprotection by promoting glutathione synthesis and delivery from non-neuronal cells such as astrocytes and meningeal cells to immature neurons. Controls the production of pheomelanin pigment directly. In Homo sapiens (Human), this protein is Cystine/glutamate transporter.